A 340-amino-acid polypeptide reads, in one-letter code: N-acetyl-gamma-glutamyl-phosphate reductase (340 aa).

The active site involves Cys146.

It belongs to the NAGSA dehydrogenase family. Type 1 subfamily.

The protein resides in the cytoplasm. The enzyme catalyses N-acetyl-L-glutamate 5-semialdehyde + phosphate + NADP(+) = N-acetyl-L-glutamyl 5-phosphate + NADPH + H(+). It participates in amino-acid biosynthesis; L-arginine biosynthesis; N(2)-acetyl-L-ornithine from L-glutamate: step 3/4. In terms of biological role, catalyzes the NADPH-dependent reduction of N-acetyl-5-glutamyl phosphate to yield N-acetyl-L-glutamate 5-semialdehyde. The sequence is that of N-acetyl-gamma-glutamyl-phosphate reductase from Streptococcus thermophilus (strain ATCC BAA-491 / LMD-9).